Reading from the N-terminus, the 218-residue chain is Ependymin (218 aa).

The signal sequence occupies residues M1–G20. N-linked (GlcNAc...) asparagine glycans are attached at residues N74 and N97.

It belongs to the ependymin family. Forms disulfide-linked dimers. Post-translationally, binds calcium through the terminal sialic acids.

The protein resides in the secreted. May play a role in neural plasticity. May be involved during axon regeneration. This chain is Ependymin (epd), found in Devario aequipinnatus (Giant danio).